A 242-amino-acid chain; its full sequence is Terpene cyclase dpchB (242 aa).

The next 7 membrane-spanning stretches (helical) occupy residues 16–36 (VVWIADTCKLIMGIGWTANYV), 51–71 (ALLPLCCNFAWELTYAIMYAF), 78–95 (YVHFSGLLLNCGVMYTAV), 114–134 (LIFVLAVAGFASAHVVLAKQV), 141–161 (AWSAYACQLLLSVGGLCQLLC), 169–189 (SYFLWFSRFFGSLVLVPQDII), and 207–227 (IWFVTIFLILDGSYGLCLWYV).

Belongs to the paxB family.

Its subcellular location is the membrane. It participates in secondary metabolite biosynthesis; terpenoid biosynthesis. Terpene cyclase; part of the gene cluster that mediates the biosynthesis of the diterpenoid pyrones higginsianins A and B. The first step of the pathway is the synthesis of the alpha-pyrone moiety by the polyketide synthase dpchA via condensation of one acetyl-CoA starter unit with 3 malonyl-CoA units and 2 methylations. The alpha-pyrone is then combined with geranylgeranyl pyrophosphate (GGPP) formed by the GGPP synthase dpchD through the action of the prenyltransferase dpchC to yield a linear alpha-pyrone diterpenoid. Subsequent steps in the diterpenoid pyrone biosynthetic pathway involve the decalin core formation, which is initiated by the epoxidation of the C10-C11 olefin by the FAD-dependent oxidoreductase dpchE, and is followed by a cyclization cascade catalyzed by the terpene cyclase dpchB. The short chain dehydrogenase/reductase dpchG then oxidizes the 8S hydroxy group to a ketone and the short chain dehydrogenase/reductase dpchH reduces the ketone to the 8R hydroxy group to yield higginsianin B. Finally, the FAD-dependent oxidoreductase dpchF converts higginsianin B into higginsianin A. The polypeptide is Terpene cyclase dpchB (Colletotrichum higginsianum (strain IMI 349063) (Crucifer anthracnose fungus)).